We begin with the raw amino-acid sequence, 199 residues long: NADH-quinone oxidoreductase subunit C (199 aa).

Belongs to the complex I 30 kDa subunit family. In terms of assembly, NDH-1 is composed of 14 different subunits. Subunits NuoB, C, D, E, F, and G constitute the peripheral sector of the complex.

The protein resides in the cell inner membrane. It catalyses the reaction a quinone + NADH + 5 H(+)(in) = a quinol + NAD(+) + 4 H(+)(out). Its function is as follows. NDH-1 shuttles electrons from NADH, via FMN and iron-sulfur (Fe-S) centers, to quinones in the respiratory chain. The immediate electron acceptor for the enzyme in this species is believed to be ubiquinone. Couples the redox reaction to proton translocation (for every two electrons transferred, four hydrogen ions are translocated across the cytoplasmic membrane), and thus conserves the redox energy in a proton gradient. The chain is NADH-quinone oxidoreductase subunit C from Polynucleobacter necessarius subsp. necessarius (strain STIR1).